We begin with the raw amino-acid sequence, 495 residues long: Formin-like protein 17 (495 aa).

The segment at M1–R92 is disordered. Pro residues predominate over residues G19–L29. The span at Q30–S39 shows a compositional bias: low complexity. In terms of domain architecture, FH2 spans K86–K486.

This sequence belongs to the formin-like family. Class-II subfamily.

The protein is Formin-like protein 17 (FH17) of Arabidopsis thaliana (Mouse-ear cress).